The sequence spans 428 residues: Adenylosuccinate synthetase (428 aa).

GTP contacts are provided by residues 12–18 (GDEGKGK) and 40–42 (GHT). D13 acts as the Proton acceptor in catalysis. Mg(2+) contacts are provided by D13 and G40. Residues 13 to 16 (DEGK), 38 to 41 (NAGH), T129, R143, Q224, T239, and R303 contribute to the IMP site. The Proton donor role is filled by H41. 299-305 (VTTGRIR) is a substrate binding site. GTP-binding positions include R305, 331–333 (KVD), and 410–412 (AYG).

It belongs to the adenylosuccinate synthetase family. In terms of assembly, homodimer. Mg(2+) is required as a cofactor.

Its subcellular location is the cytoplasm. It catalyses the reaction IMP + L-aspartate + GTP = N(6)-(1,2-dicarboxyethyl)-AMP + GDP + phosphate + 2 H(+). Its pathway is purine metabolism; AMP biosynthesis via de novo pathway; AMP from IMP: step 1/2. Its function is as follows. Plays an important role in the de novo pathway of purine nucleotide biosynthesis. Catalyzes the first committed step in the biosynthesis of AMP from IMP. This chain is Adenylosuccinate synthetase, found in Francisella tularensis subsp. novicida (strain U112).